The chain runs to 731 residues: Polyribonucleotide nucleotidyltransferase (731 aa).

Residues Asp488 and Asp494 each contribute to the Mg(2+) site. Residues 555–614 (PRIEVINIAVDKIRDVIGSGGKVIREIVEQTGAKINIEDDGTIKIASADAKTIEAAKRWI) form the KH domain. An S1 motif domain is found at 624 to 692 (GAIYQGTVVK…ERGKVRLSMK (69 aa)). Residues 693–731 (AVDQKTGKEMTDDKSVKEEKCMDEKKQPENKRRRKKKEE) are disordered. Basic and acidic residues predominate over residues 694–722 (VDQKTGKEMTDDKSVKEEKCMDEKKQPEN).

Belongs to the polyribonucleotide nucleotidyltransferase family. Mg(2+) is required as a cofactor.

Its subcellular location is the cytoplasm. It catalyses the reaction RNA(n+1) + phosphate = RNA(n) + a ribonucleoside 5'-diphosphate. Its function is as follows. Involved in mRNA degradation. Catalyzes the phosphorolysis of single-stranded polyribonucleotides processively in the 3'- to 5'-direction. This chain is Polyribonucleotide nucleotidyltransferase, found in Bartonella tribocorum (strain CIP 105476 / IBS 506).